The chain runs to 307 residues: MTEQATKPRNSSHLIGGFFGGLTSAVALQPLDLLKTRIQQDKKATLWKNLKEIDSPLQLWRGTLPSALRTSIGSALYLSCLNLMRSSLAKRRNAVPSLTNDSNIVYNKSSSLPRLTMYENLLTGAFARGLVGYITMPITVIKVRYESTLYNYSSLKEAITHIYTKEGLFGFFRGFGATCLRDAPYAGLYVLLYEKSKQLLPMVLPSRFIHYNPEGGFTTYTSTTVNTTSAVLSASLATTVTAPFDTIKTRMQLEPSKFTNSFNTFTSIVKNENVLKLFSGLSMRLARKALSAGIAWGIYEELVKRFM.

Solcar repeat units lie at residues 8–87, 115–199, and 221–305; these read PRNS…MRSS, LTMY…SKQL, and TSTT…LVKR. Helical transmembrane passes span 14 to 39, 62 to 88, 121 to 146, 174 to 197, 225 to 251, and 280 to 298; these read LIGG…TRIQ, GTLP…RSSL, LLTG…VRYE, GFGA…EKSK, VNTT…KTRM, and GLSM…AWGI.

This sequence belongs to the mitochondrial carrier (TC 2.A.29) family. SLC25A38 subfamily.

The protein localises to the mitochondrion inner membrane. The catalysed reaction is glycine(in) = glycine(out). Its function is as follows. Mitochondrial glycine transporter that imports glycine into the mitochondrial matrix. Plays an important role in providing glycine for the first enzymatic step in heme biosynthesis, the condensation of glycine with succinyl-CoA to produce 5-aminolevulinate (ALA) in the mitochondrial matrix. The sequence is that of Mitochondrial glycine transporter from Saccharomyces cerevisiae (strain RM11-1a) (Baker's yeast).